We begin with the raw amino-acid sequence, 603 residues long: UvrABC system protein C (603 aa).

The 78-residue stretch at 15 to 92 folds into the GIY-YIG domain; sequence DQPGCYLMKD…IKKHDPRFNI (78 aa). Positions 197–232 constitute a UVR domain; the sequence is KTVKNDLMKKMQEAAENMEFEKAGEFRDQINAIETT.

This sequence belongs to the UvrC family. In terms of assembly, interacts with UvrB in an incision complex.

The protein localises to the cytoplasm. Functionally, the UvrABC repair system catalyzes the recognition and processing of DNA lesions. UvrC both incises the 5' and 3' sides of the lesion. The N-terminal half is responsible for the 3' incision and the C-terminal half is responsible for the 5' incision. The polypeptide is UvrABC system protein C (Listeria monocytogenes serovar 1/2a (strain ATCC BAA-679 / EGD-e)).